The following is an 84-amino-acid chain: Large ribosomal subunit protein uL29 (84 aa).

This sequence belongs to the universal ribosomal protein uL29 family.

The chain is Large ribosomal subunit protein uL29 from Mycoplasma mobile (strain ATCC 43663 / 163K / NCTC 11711) (Mesomycoplasma mobile).